We begin with the raw amino-acid sequence, 190 residues long: Inosine triphosphate pyrophosphatase (190 aa).

Residue 9-14 (TGNAKK) coordinates ITP. Glu-39 is a binding site for Mg(2+). ITP contacts are provided by residues Lys-51, 67-68 (DT), Lys-84, 144-147 (FGWD), Lys-167, and 172-173 (HR).

Belongs to the HAM1 NTPase family. Homodimer. The cofactor is Mg(2+). Requires Mn(2+) as cofactor.

The protein localises to the cytoplasm. The enzyme catalyses ITP + H2O = IMP + diphosphate + H(+). The catalysed reaction is dITP + H2O = dIMP + diphosphate + H(+). It carries out the reaction XTP + H2O = XMP + diphosphate + H(+). Pyrophosphatase that hydrolyzes non-canonical purine nucleotides such as inosine triphosphate (ITP), deoxyinosine triphosphate (dITP) or xanthosine 5'-triphosphate (XTP) to their respective monophosphate derivatives. The enzyme does not distinguish between the deoxy- and ribose forms. Probably excludes non-canonical purines from RNA and DNA precursor pools, thus preventing their incorporation into RNA and DNA and avoiding chromosomal lesions. This chain is Inosine triphosphate pyrophosphatase, found in Pediculus humanus subsp. corporis (Body louse).